The chain runs to 183 residues: UPF0114 protein HI_0507 (183 aa).

3 helical membrane-spanning segments follow: residues 30–50 (LQVP…YKFI), 68–88 (IMLG…LVMV), and 150–170 (TMMW…ALAY).

The protein belongs to the UPF0114 family.

It is found in the cell membrane. In Haemophilus influenzae (strain ATCC 51907 / DSM 11121 / KW20 / Rd), this protein is UPF0114 protein HI_0507.